Here is a 156-residue protein sequence, read N- to C-terminus: Small ribosomal subunit protein uS7 (156 aa).

This sequence belongs to the universal ribosomal protein uS7 family. In terms of assembly, part of the 30S ribosomal subunit. Contacts proteins S9 and S11.

Its function is as follows. One of the primary rRNA binding proteins, it binds directly to 16S rRNA where it nucleates assembly of the head domain of the 30S subunit. Is located at the subunit interface close to the decoding center, probably blocks exit of the E-site tRNA. The sequence is that of Small ribosomal subunit protein uS7 from Finegoldia magna (strain ATCC 29328 / DSM 20472 / WAL 2508) (Peptostreptococcus magnus).